The primary structure comprises 119 residues: Large ribosomal subunit protein bL20 (119 aa).

Belongs to the bacterial ribosomal protein bL20 family.

Its function is as follows. Binds directly to 23S ribosomal RNA and is necessary for the in vitro assembly process of the 50S ribosomal subunit. It is not involved in the protein synthesizing functions of that subunit. The protein is Large ribosomal subunit protein bL20 of Clostridium botulinum (strain Alaska E43 / Type E3).